Consider the following 406-residue polypeptide: Peptidase T (406 aa).

H78 serves as a coordination point for Zn(2+). D80 is a catalytic residue. A Zn(2+)-binding site is contributed by D139. E173 functions as the Proton acceptor in the catalytic mechanism. Positions 174, 196, and 378 each coordinate Zn(2+).

It belongs to the peptidase M20B family. Zn(2+) serves as cofactor.

It localises to the cytoplasm. The enzyme catalyses Release of the N-terminal residue from a tripeptide.. Its function is as follows. Cleaves the N-terminal amino acid of tripeptides. The sequence is that of Peptidase T from Clostridium perfringens (strain SM101 / Type A).